The following is a 428-amino-acid chain: Zinc-type alcohol dehydrogenase B (428 aa).

The Zn(2+) site is built by C116, H137, C167, C170, C173, and C181. K393 bears the N6-benzoyllysine mark.

The protein belongs to the zinc-containing alcohol dehydrogenase family. Class-III subfamily. Homodimer. The cofactor is Zn(2+). Benzoylation at lys-393 by gcnE leads to the activation od adhB.

The catalysed reaction is a primary alcohol + NAD(+) = an aldehyde + NADH + H(+). It carries out the reaction a secondary alcohol + NAD(+) = a ketone + NADH + H(+). Its function is as follows. Zinc-type alcohol dehydrogenase involved in development, secondary metabolism, pathogenicity, and stress response. Specifically controls the formation of sclerotia and the biosynthesis of aflatoxin. Contribute to seed colonization of A flavus on host maize seed. The polypeptide is Zinc-type alcohol dehydrogenase B (Aspergillus flavus (strain ATCC 200026 / FGSC A1120 / IAM 13836 / NRRL 3357 / JCM 12722 / SRRC 167)).